Consider the following 448-residue polypeptide: tRNA modification GTPase MnmE (448 aa).

(6S)-5-formyl-5,6,7,8-tetrahydrofolate contacts are provided by arginine 22, glutamate 83, and arginine 122. A TrmE-type G domain is found at 219-369 (GVKTVIVGRP…LESEILKTLK (151 aa)). Asparagine 229 is a binding site for K(+). Residues 229–234 (NVGKSS), 248–254 (SDIAGTT), and 273–276 (DTAG) each bind GTP. Serine 233 contributes to the Mg(2+) binding site. Serine 248, isoleucine 250, and threonine 253 together coordinate K(+). Threonine 254 contacts Mg(2+). Lysine 448 lines the (6S)-5-formyl-5,6,7,8-tetrahydrofolate pocket.

Belongs to the TRAFAC class TrmE-Era-EngA-EngB-Septin-like GTPase superfamily. TrmE GTPase family. As to quaternary structure, homodimer. Heterotetramer of two MnmE and two MnmG subunits. K(+) is required as a cofactor.

The protein localises to the cytoplasm. Its function is as follows. Exhibits a very high intrinsic GTPase hydrolysis rate. Involved in the addition of a carboxymethylaminomethyl (cmnm) group at the wobble position (U34) of certain tRNAs, forming tRNA-cmnm(5)s(2)U34. This is tRNA modification GTPase MnmE from Acholeplasma laidlawii (strain PG-8A).